The sequence spans 870 residues: Patatin-like phospholipase domain-containing protein NCU11180 (870 aa).

Disordered regions lie at residues 1-24 (MADDTDNPPNIQIPAKSYGFPPEA) and 131-158 (KVIKTDRDEKRNKRGKDRKNKKPRKGVA). A compositionally biased stretch (basic and acidic residues) spans 131–141 (KVIKTDRDEKR). Basic residues predominate over residues 142–155 (NKRGKDRKNKKPRK). A helical transmembrane segment spans residues 183 to 203 (WPFLLFVSFWIVGLGMAYLAT). Positions 281–320 (EEVERELESQSQNSDSGVASGEETSNTKAGGGNNGNDKKT) are disordered. Over residues 289 to 308 (SQSQNSDSGVASGEETSNTK) the composition is skewed to polar residues. The region spanning 399–590 (LCLSGGATFA…RTDIPIKSLN (192 aa)) is the PNPLA domain. A GXSXG motif is present at residues 430–434 (GTSGG). The active-site Nucleophile is S432. The active-site Proton acceptor is D577. Disordered stretches follow at residues 735–786 (RRET…DRRG) and 804–870 (GREG…HSRT). The span at 818-834 (TEDELTMTELEGEDDDG) shows a compositional bias: acidic residues.

The protein belongs to the PLPL family.

It is found in the membrane. In terms of biological role, probable lipid hydrolase. In Neurospora crassa (strain ATCC 24698 / 74-OR23-1A / CBS 708.71 / DSM 1257 / FGSC 987), this protein is Patatin-like phospholipase domain-containing protein NCU11180.